We begin with the raw amino-acid sequence, 92 residues long: Small ribosomal subunit protein bS18 (92 aa).

Residues Met-1–Phe-28 are disordered. The segment covering Pro-12–Lys-22 has biased composition (basic residues).

The protein belongs to the bacterial ribosomal protein bS18 family. Part of the 30S ribosomal subunit. Forms a tight heterodimer with protein bS6.

Its function is as follows. Binds as a heterodimer with protein bS6 to the central domain of the 16S rRNA, where it helps stabilize the platform of the 30S subunit. This is Small ribosomal subunit protein bS18 from Deinococcus radiodurans (strain ATCC 13939 / DSM 20539 / JCM 16871 / CCUG 27074 / LMG 4051 / NBRC 15346 / NCIMB 9279 / VKM B-1422 / R1).